Reading from the N-terminus, the 339-residue chain is 1-aminocyclopropane-1-carboxylate deaminase (339 aa).

K52 bears the N6-(pyridoxal phosphate)lysine mark. Residue S79 is the Nucleophile of the active site.

Belongs to the ACC deaminase/D-cysteine desulfhydrase family. In terms of assembly, homotrimer. The cofactor is pyridoxal 5'-phosphate.

The catalysed reaction is 1-aminocyclopropane-1-carboxylate + H2O = 2-oxobutanoate + NH4(+). Functionally, catalyzes a cyclopropane ring-opening reaction, the irreversible conversion of 1-aminocyclopropane-1-carboxylate (ACC) to ammonia and alpha-ketobutyrate. Allows growth on ACC as a nitrogen source. This is 1-aminocyclopropane-1-carboxylate deaminase from Rhizobium leguminosarum bv. viciae.